A 152-amino-acid chain; its full sequence is Putative aryl-alcohol dehydrogenase YFL057C (152 aa).

It belongs to the aldo/keto reductase family. Aldo/keto reductase 2 subfamily.

In terms of biological role, putative aryl-alcohol dehydrogenase. This is Putative aryl-alcohol dehydrogenase YFL057C from Saccharomyces cerevisiae (strain ATCC 204508 / S288c) (Baker's yeast).